We begin with the raw amino-acid sequence, 129 residues long: Flagellar assembly factor FliW 2 (129 aa).

Belongs to the FliW family. Interacts with translational regulator CsrA and flagellin(s).

The protein resides in the cytoplasm. In terms of biological role, acts as an anti-CsrA protein, binds CsrA and prevents it from repressing translation of its target genes, one of which is flagellin. Binds to flagellin and participates in the assembly of the flagellum. The polypeptide is Flagellar assembly factor FliW 2 (Helicobacter pylori (strain HPAG1)).